Reading from the N-terminus, the 2185-residue chain is Genome polyprotein (2185 aa).

G2 is lipidated: N-myristoyl glycine; by host. Residues 2–1495 (GAQVSTQKTG…HVSRAFICLQ (1494 aa)) are Cytoplasmic-facing. The segment at 568-584 (FFQGPVEDAITAAIGRV) is amphipathic alpha-helix. Residues H872 and D890 each act as for protease 2A activity in the active site. Residues C907 and C909 each contribute to the Zn(2+) site. Residue C961 is the For protease 2A activity of the active site. C967 and H969 together coordinate Zn(2+). The membrane-binding stretch occupies residues 1101–1173 (NNSWLKKFTE…EQSAPSQSDQ (73 aa)). An oligomerization region spans residues 1101 to 1239 (NNSWLKKFTE…SPGAGKSVAT (139 aa)). The segment at 1122–1126 (AVKIQ) is RNA-binding. The region spanning 1205-1361 (EKKMSNYIQF…SMYSQNGKIN (157 aa)) is the SF3 helicase domain. Residues C1369, C1381, and C1386 each coordinate Zn(2+). The segment at 1369-1386 (CDDECCPVNFKKCCPLVC) adopts a C4-type; degenerate zinc-finger fold. Residues 1413–1420 (EYNHRHSV) are RNA-binding. Residues 1424–1429 (LEALFQ) are oligomerization. Residues 1496–1511 (ALTTFVSVAGIIYIIY) lie within the membrane without spanning it. Residues 1512-2185 (KLFAGFQGAY…TLRRKWLDSF (674 aa)) are Cytoplasmic-facing. Y1521 is subject to O-(5'-phospho-RNA)-tyrosine. Positions 1541–1719 (GPAFEFAVAM…FSAALLKHYF (179 aa)) constitute a Peptidase C3 domain. Catalysis depends on for protease 3C activity residues H1580, E1611, and C1687. Residues 1950–2066 (GHLIAFDYSG…SYPWPIDASL (117 aa)) enclose the RdRp catalytic domain. 2 residues coordinate Mg(2+): D1956 and D2052.

Belongs to the picornaviruses polyprotein family. As to quaternary structure, interacts with capsid protein VP1 and capsid protein VP3 to form heterotrimeric protomers. In terms of assembly, interacts with capsid protein VP0, and capsid protein VP3 to form heterotrimeric protomers. Five protomers subsequently associate to form pentamers which serve as building blocks for the capsid. Interacts with capsid protein VP2, capsid protein VP3 and capsid protein VP4 following cleavage of capsid protein VP0. Interacts with host CD55. Interacts with host CXADR. Interacts with capsid protein VP1 and capsid protein VP3 in the mature capsid. As to quaternary structure, interacts with capsid protein VP0 and capsid protein VP1 to form heterotrimeric protomers. Five protomers subsequently associate to form pentamers which serve as building blocks for the capsid. Interacts with capsid protein VP4 in the mature capsid. Interacts with protein 2C; this interaction may be important for virion morphogenesis. In terms of assembly, interacts with capsid protein VP1 and capsid protein VP3. Homodimer. As to quaternary structure, homohexamer; forms a hexameric ring structure with 6-fold symmetry characteristic of AAA+ ATPases. Interacts (via N-terminus) with host RTN3 (via reticulon domain); this interaction is important for viral replication. Interacts with capsid protein VP3; this interaction may be important for virion morphogenesis. In terms of assembly, interacts with protein 3CD. Homodimer. Interacts with host GBF1. Interacts (via GOLD domain) with host ACBD3 (via GOLD domain); this interaction allows the formation of a viral protein 3A/ACBD3 heterotetramer with a 2:2 stoichiometry, which will stimulate the recruitment of host PI4KB in order to synthesize PI4P at the viral RNA replication sites. As to quaternary structure, interacts with RNA-directed RNA polymerase. In terms of assembly, interacts with host TICAM1 (via C-terminus). Interacts with protein 3AB and with RNA-directed RNA polymerase. As to quaternary structure, interacts with Viral protein genome-linked and with protein 3CD. The cofactor is Mg(2+). In terms of processing, specific enzymatic cleavages in vivo by the viral proteases yield processing intermediates and the mature proteins. Post-translationally, myristoylation is required for the formation of pentamers during virus assembly. Further assembly of 12 pentamers and a molecule of genomic RNA generates the provirion. During virion maturation, immature virions are rendered infectious following cleavage of VP0 into VP4 and VP2. This maturation seems to be an autocatalytic event triggered by the presence of RNA in the capsid and it is followed by a conformational change infectious virion. In terms of processing, myristoylation is required during RNA encapsidation and formation of the mature virus particle. Post-translationally, VPg is uridylylated by the polymerase into VPg-pUpU. This acts as a nucleotide-peptide primer for the genomic RNA replication.

It is found in the virion. The protein localises to the host cytoplasm. The protein resides in the host cytoplasmic vesicle membrane. It localises to the host nucleus. The enzyme catalyses a ribonucleoside 5'-triphosphate + H2O = a ribonucleoside 5'-diphosphate + phosphate + H(+). The catalysed reaction is Selective cleavage of Tyr-|-Gly bond in the picornavirus polyprotein.. It carries out the reaction RNA(n) + a ribonucleoside 5'-triphosphate = RNA(n+1) + diphosphate. It catalyses the reaction Selective cleavage of Gln-|-Gly bond in the poliovirus polyprotein. In other picornavirus reactions Glu may be substituted for Gln, and Ser or Thr for Gly.. Its activity is regulated as follows. Replication or transcription is subject to high level of random mutations by the nucleotide analog ribavirin. Its function is as follows. Forms an icosahedral capsid of pseudo T=3 symmetry with capsid proteins VP2 and VP3. The capsid is 300 Angstroms in diameter, composed of 60 copies of each capsid protein and enclosing the viral positive strand RNA genome. Capsid protein VP1 mainly forms the vertices of the capsid. Capsid protein VP1 interacts with host CD55 and CXADR to provide virion attachment to target host cells. This attachment induces virion internalization. Tyrosine kinases are probably involved in the entry process. After binding to its receptor, the capsid undergoes conformational changes. Capsid protein VP1 N-terminus (that contains an amphipathic alpha-helix) and capsid protein VP4 are externalized. Together, they shape a pore in the host membrane through which viral genome is translocated to host cell cytoplasm. Forms an icosahedral capsid of pseudo T=3 symmetry with capsid proteins VP2 and VP3. The capsid is 300 Angstroms in diameter, composed of 60 copies of each capsid protein and enclosing the viral positive strand RNA genome. In terms of biological role, lies on the inner surface of the capsid shell. After binding to the host receptor, the capsid undergoes conformational changes. Capsid protein VP4 is released, Capsid protein VP1 N-terminus is externalized, and together, they shape a pore in the host membrane through which the viral genome is translocated into the host cell cytoplasm. Functionally, component of immature procapsids, which is cleaved into capsid proteins VP4 and VP2 after maturation. Allows the capsid to remain inactive before the maturation step. Its function is as follows. Cysteine protease that cleaves viral polyprotein and specific host proteins. It is responsible for the autocatalytic cleavage between the P1 and P2 regions, which is the first cleavage occurring in the polyprotein. Also cleaves the host translation initiation factor EIF4G1, in order to shut down the capped cellular mRNA translation. Inhibits the host nucleus-cytoplasm protein and RNA trafficking by cleaving host members of the nuclear pores. Counteracts stress granule formation probably by antagonizing its assembly or promoting its dissassembly. Cleaves and inhibits host IFIH1/MDA5, thereby inhibiting the type-I IFN production and the establishment of the antiviral state. Cleaves and inhibits host MAVS, thereby inhibiting the type-I IFN production and the establishment of the antiviral state. Plays an essential role in the virus replication cycle by acting as a viroporin. Creates a pore in the host endoplasmic reticulum and as a consequence releases Ca2+ in the cytoplasm of infected cell. In turn, high levels of cytoplasmic calcium may trigger membrane trafficking and transport of viral ER-associated proteins to viroplasms, sites of viral genome replication. In terms of biological role, induces and associates with structural rearrangements of intracellular membranes. Displays RNA-binding, nucleotide binding and NTPase activities. May play a role in virion morphogenesis and viral RNA encapsidation by interacting with the capsid protein VP3. Functionally, localizes the viral replication complex to the surface of membranous vesicles. Together with protein 3CD binds the Cis-Active RNA Element (CRE) which is involved in RNA synthesis initiation. Acts as a cofactor to stimulate the activity of 3D polymerase, maybe through a nucleid acid chaperone activity. Its function is as follows. Localizes the viral replication complex to the surface of membranous vesicles. It inhibits host cell endoplasmic reticulum-to-Golgi apparatus transport and causes the disassembly of the Golgi complex, possibly through GBF1 interaction. This would result in depletion of MHC, trail receptors and IFN receptors at the host cell surface. Plays an essential role in viral RNA replication by recruiting ACBD3 and PI4KB at the viral replication sites, thereby allowing the formation of the rearranged membranous structures where viral replication takes place. Acts as a primer for viral RNA replication and remains covalently bound to viral genomic RNA. VPg is uridylylated prior to priming replication into VPg-pUpU. The oriI viral genomic sequence may act as a template for this. The VPg-pUpU is then used as primer on the genomic RNA poly(A) by the RNA-dependent RNA polymerase to replicate the viral genome. During genome replication, the VPg-RNA linkage is removed by the host TDP2, thereby accelerating replication. During the late stage of the replication cycle, host TDP2 is excluded from sites of viral RNA synthesis and encapsidation, allowing for the generation of progeny virions. In terms of biological role, involved in the viral replication complex and viral polypeptide maturation. It exhibits protease activity with a specificity and catalytic efficiency that is different from protease 3C. Protein 3CD lacks polymerase activity. Protein 3CD binds to the 5'UTR of the viral genome. Functionally, major viral protease that mediates proteolytic processing of the polyprotein. Cleaves host EIF5B, contributing to host translation shutoff. Cleaves also host PABPC1, contributing to host translation shutoff. Cleaves and inhibits host RIGI, thereby inhibiting the type-I IFN production and the establishment of the antiviral state. Cleaves and inhibits host MAVS, thereby inhibiting the type-I IFN production and the establishment of the antiviral state. Cleaves and inhibits host TICAM1/TRIF, thereby inhibiting the type-I IFN production. Cleaves host NLRP1, triggers host N-glycine-mediated degradation of the autoinhibitory NLRP1 N-terminal fragment. Cleaves host transcription factor TFEB, thereby disrupting host lysosomal functions and enhancing viral infection. Its function is as follows. Replicates the viral genomic RNA on the surface of intracellular membranes. May form linear arrays of subunits that propagate along a strong head-to-tail interaction called interface-I. Covalently attaches UMP to a tyrosine of VPg, which is used to prime RNA synthesis. The positive stranded RNA genome is first replicated at virus induced membranous vesicles, creating a dsRNA genomic replication form. This dsRNA is then used as template to synthesize positive stranded RNA genomes. ss(+)RNA genomes are either translated, replicated or encapsidated. In Coxsackievirus B3 (strain Nancy), this protein is Genome polyprotein.